Here is a 196-residue protein sequence, read N- to C-terminus: Small ribosomal subunit protein uS4c (196 aa).

Residues 17–36 (ALPGLTRKTPKSGSNLKKKF) are disordered. One can recognise an S4 RNA-binding domain in the interval 89–150 (MRLDNIVFRL…NQRSKRLVQN (62 aa)).

Belongs to the universal ribosomal protein uS4 family. In terms of assembly, part of the 30S ribosomal subunit. Contacts protein S5. The interaction surface between S4 and S5 is involved in control of translational fidelity.

The protein resides in the plastid. It localises to the chloroplast. In terms of biological role, one of the primary rRNA binding proteins, it binds directly to 16S rRNA where it nucleates assembly of the body of the 30S subunit. Its function is as follows. With S5 and S12 plays an important role in translational accuracy. This is Small ribosomal subunit protein uS4c (rps4) from Tragus racemosus (Carrot grass).